A 152-amino-acid chain; its full sequence is Ribonuclease pancreatic (152 aa).

A signal peptide spans 1 to 24 (MALDKSVILLPLLVLVLLVLGCLG). Lys31 and Arg34 together coordinate substrate. The active-site Proton acceptor is His36. A glycan (N-linked (GlcNAc...) asparagine) is linked at Asn46. Cystine bridges form between Cys50–Cys108, Cys64–Cys119, Cys82–Cys134, and Cys89–Cys96. Residues 65 to 69 (KPVNT), Lys90, and Arg109 contribute to the substrate site. N-linked (GlcNAc...) asparagine glycosylation is present at Asn112. His143 (proton donor) is an active-site residue.

It belongs to the pancreatic ribonuclease family. In terms of assembly, monomer. Interacts with and forms tight 1:1 complexes with RNH1. Dimerization of two such complexes may occur. Interaction with RNH1 inhibits this protein.

The protein resides in the secreted. It carries out the reaction an [RNA] containing cytidine + H2O = an [RNA]-3'-cytidine-3'-phosphate + a 5'-hydroxy-ribonucleotide-3'-[RNA].. The catalysed reaction is an [RNA] containing uridine + H2O = an [RNA]-3'-uridine-3'-phosphate + a 5'-hydroxy-ribonucleotide-3'-[RNA].. Endonuclease that catalyzes the cleavage of RNA on the 3' side of pyrimidine nucleotides. Acts on single-stranded and double-stranded RNA. The chain is Ribonuclease pancreatic (RNASE1) from Miopithecus talapoin (Angolan talapoin).